Consider the following 430-residue polypeptide: Tapasin (430 aa).

Positions 1 to 15 are cleaved as a signal peptide; it reads MAAGLRLLLAGLCWS. Residues 16 to 399 are Lumenal-facing; sequence QFRVEDAASP…TEGPHLEDIT (384 aa). Cysteine 34 and cysteine 99 are disulfide-bonded. The tract at residues 61–128 is disordered; the sequence is GDAETPPEPG…PDARSPPTAG (68 aa). An N-linked (GlcNAc...) asparagine glycan is attached at asparagine 78. Residues 101 to 111 show a composition bias toward polar residues; that stretch reads LNPTNPQTGSD. 2 Ig-like C1-type domains span residues 139–273 and 278–382; these read PQYG…LQLH and PKVT…MRVS. A disulfide bond links cysteine 299 and cysteine 368. The tract at residues 316–342 is disordered; it reads RAGGSGTSQSPRDTVMDSWTSGHRQAA. The segment covering 322-338 has biased composition (polar residues); it reads TSQSPRDTVMDSWTSGH. Residues 400–417 traverse the membrane as a helical segment; that stretch reads GLFLVAFVLCGLIRWLYP. Topologically, residues 418 to 430 are cytoplasmic; the sequence is KAARPKEETKKSQ.

Interacts with TAP1 and is thus a subunit of the TAP complex. Interaction with TAP1 is TAP2 independent and is required for efficient peptide-TAP interaction. Obligatory mediator for the interaction between newly assembled MHC class I molecules, calreticulin, ERp57 and TAP. Up to 4 MHC class I/tapasin complexes bind to 1 TAP.

It is found in the endoplasmic reticulum membrane. In terms of biological role, involved in the association of MHC class I with transporter associated with antigen processing (TAP) and in the assembly of MHC class I with peptide (peptide loading). This chain is Tapasin (TAPBP), found in Gallus gallus (Chicken).